A 45-amino-acid polypeptide reads, in one-letter code: uncharacterized protein (45 aa).

Positions 1–19 are cleaved as a signal peptide; sequence MTFQILFLFVFHFVYIFRA.

This is an uncharacterized protein from Saccharomyces cerevisiae (strain ATCC 204508 / S288c) (Baker's yeast).